Here is a 323-residue protein sequence, read N- to C-terminus: Aspartate carbamoyltransferase catalytic subunit (323 aa).

Carbamoyl phosphate contacts are provided by Arg-71 and Thr-72. Position 99 (Lys-99) interacts with L-aspartate. Carbamoyl phosphate contacts are provided by Arg-121, His-151, and Gln-154. L-aspartate-binding residues include Arg-184 and Arg-239. Carbamoyl phosphate-binding residues include Gly-280 and Pro-281.

Belongs to the aspartate/ornithine carbamoyltransferase superfamily. ATCase family. As to quaternary structure, heterododecamer (2C3:3R2) of six catalytic PyrB chains organized as two trimers (C3), and six regulatory PyrI chains organized as three dimers (R2).

It catalyses the reaction carbamoyl phosphate + L-aspartate = N-carbamoyl-L-aspartate + phosphate + H(+). The protein operates within pyrimidine metabolism; UMP biosynthesis via de novo pathway; (S)-dihydroorotate from bicarbonate: step 2/3. Functionally, catalyzes the condensation of carbamoyl phosphate and aspartate to form carbamoyl aspartate and inorganic phosphate, the committed step in the de novo pyrimidine nucleotide biosynthesis pathway. The protein is Aspartate carbamoyltransferase catalytic subunit of Cupriavidus pinatubonensis (strain JMP 134 / LMG 1197) (Cupriavidus necator (strain JMP 134)).